Here is a 962-residue protein sequence, read N- to C-terminus: Integrator complex subunit 7 (962 aa).

Phosphoserine is present on residues Ser-338 and Ser-809.

This sequence belongs to the Integrator subunit 7 family. In terms of assembly, component of the Integrator complex, composed of core subunits INTS1, INTS2, INTS3, INTS4, INTS5, INTS6, INTS7, INTS8, INTS9/RC74, INTS10, INTS11/CPSF3L, INTS12, INTS13, INTS14 and INTS15. The core complex associates with protein phosphatase 2A subunits PPP2CA and PPP2R1A, to form the Integrator-PP2A (INTAC) complex. Interacts with NABP2.

Its subcellular location is the nucleus. It localises to the chromosome. The protein localises to the cytoplasm. In terms of biological role, component of the integrator complex, a multiprotein complex that terminates RNA polymerase II (Pol II) transcription in the promoter-proximal region of genes. The integrator complex provides a quality checkpoint during transcription elongation by driving premature transcription termination of transcripts that are unfavorably configured for transcriptional elongation: the complex terminates transcription by (1) catalyzing dephosphorylation of the C-terminal domain (CTD) of Pol II subunit POLR2A/RPB1 and SUPT5H/SPT5, (2) degrading the exiting nascent RNA transcript via endonuclease activity and (3) promoting the release of Pol II from bound DNA. The integrator complex is also involved in terminating the synthesis of non-coding Pol II transcripts, such as enhancer RNAs (eRNAs), small nuclear RNAs (snRNAs), telomerase RNAs and long non-coding RNAs (lncRNAs). May be not involved in the recruitment of cytoplasmic dynein to the nuclear envelope by different components of the INT complex. Plays a role in DNA damage response (DDR) signaling during the S phase. This Homo sapiens (Human) protein is Integrator complex subunit 7.